The following is a 265-amino-acid chain: Thiazole synthase (265 aa).

Lys107 acts as the Schiff-base intermediate with DXP in catalysis. 1-deoxy-D-xylulose 5-phosphate-binding positions include Gly168, 194-195 (AG), and 216-217 (NT).

Belongs to the ThiG family. Homotetramer. Forms heterodimers with either ThiH or ThiS.

It is found in the cytoplasm. The enzyme catalyses [ThiS sulfur-carrier protein]-C-terminal-Gly-aminoethanethioate + 2-iminoacetate + 1-deoxy-D-xylulose 5-phosphate = [ThiS sulfur-carrier protein]-C-terminal Gly-Gly + 2-[(2R,5Z)-2-carboxy-4-methylthiazol-5(2H)-ylidene]ethyl phosphate + 2 H2O + H(+). The protein operates within cofactor biosynthesis; thiamine diphosphate biosynthesis. Functionally, catalyzes the rearrangement of 1-deoxy-D-xylulose 5-phosphate (DXP) to produce the thiazole phosphate moiety of thiamine. Sulfur is provided by the thiocarboxylate moiety of the carrier protein ThiS. In vitro, sulfur can be provided by H(2)S. This is Thiazole synthase from Pseudomonas aeruginosa (strain LESB58).